A 375-amino-acid polypeptide reads, in one-letter code: Histidine biosynthesis bifunctional protein HisB (375 aa).

A histidinol-phosphatase region spans residues 1–168 (MTPILFVDRD…GIAHELADAP (168 aa)). Asp8 acts as the Nucleophile in catalysis. Mg(2+) contacts are provided by Asp8, Asp10, and Asp128. Residue Asp10 is the Proton donor of the active site. An imidazoleglycerol-phosphate dehydratase region spans residues 169 to 375 (RRAVVQRNTK…TALPTTKGAL (207 aa)).

In the N-terminal section; belongs to the histidinol-phosphatase family. It in the C-terminal section; belongs to the imidazoleglycerol-phosphate dehydratase family. Requires Mg(2+) as cofactor.

Its subcellular location is the cytoplasm. It catalyses the reaction D-erythro-1-(imidazol-4-yl)glycerol 3-phosphate = 3-(imidazol-4-yl)-2-oxopropyl phosphate + H2O. The catalysed reaction is L-histidinol phosphate + H2O = L-histidinol + phosphate. The protein operates within amino-acid biosynthesis; L-histidine biosynthesis; L-histidine from 5-phospho-alpha-D-ribose 1-diphosphate: step 6/9. It functions in the pathway amino-acid biosynthesis; L-histidine biosynthesis; L-histidine from 5-phospho-alpha-D-ribose 1-diphosphate: step 8/9. This chain is Histidine biosynthesis bifunctional protein HisB, found in Xanthomonas euvesicatoria pv. vesicatoria (strain 85-10) (Xanthomonas campestris pv. vesicatoria).